A 229-amino-acid chain; its full sequence is Large ribosomal subunit protein uL1 (229 aa).

It belongs to the universal ribosomal protein uL1 family. In terms of assembly, part of the 50S ribosomal subunit.

Functionally, binds directly to 23S rRNA. The L1 stalk is quite mobile in the ribosome, and is involved in E site tRNA release. Protein L1 is also a translational repressor protein, it controls the translation of the L11 operon by binding to its mRNA. This is Large ribosomal subunit protein uL1 from Streptococcus thermophilus (strain CNRZ 1066).